An 89-amino-acid chain; its full sequence is Small ribosomal subunit protein uS15 (89 aa).

The segment covering 1–13 (MYLTSEKKEEIFS) has biased composition (basic and acidic residues). The segment at 1–24 (MYLTSEKKEEIFSKHGKGKNDTGS) is disordered.

This sequence belongs to the universal ribosomal protein uS15 family. In terms of assembly, part of the 30S ribosomal subunit. Forms a bridge to the 50S subunit in the 70S ribosome, contacting the 23S rRNA.

In terms of biological role, one of the primary rRNA binding proteins, it binds directly to 16S rRNA where it helps nucleate assembly of the platform of the 30S subunit by binding and bridging several RNA helices of the 16S rRNA. Its function is as follows. Forms an intersubunit bridge (bridge B4) with the 23S rRNA of the 50S subunit in the ribosome. This Christiangramia forsetii (strain DSM 17595 / CGMCC 1.15422 / KT0803) (Gramella forsetii) protein is Small ribosomal subunit protein uS15.